A 137-amino-acid chain; its full sequence is ATP synthase epsilon chain, chloroplastic (137 aa).

The protein belongs to the ATPase epsilon chain family. As to quaternary structure, F-type ATPases have 2 components, CF(1) - the catalytic core - and CF(0) - the membrane proton channel. CF(1) has five subunits: alpha(3), beta(3), gamma(1), delta(1), epsilon(1). CF(0) has three main subunits: a, b and c.

It is found in the plastid. It localises to the chloroplast thylakoid membrane. Produces ATP from ADP in the presence of a proton gradient across the membrane. This Pinus thunbergii (Japanese black pine) protein is ATP synthase epsilon chain, chloroplastic.